A 415-amino-acid polypeptide reads, in one-letter code: uncharacterized protein (415 aa).

Residues 179-199 are compositionally biased toward pro residues; the sequence is SPAPCSPAPGSPPPPAPPAAP. Residues 179–200 are disordered; it reads SPAPCSPAPGSPPPPAPPAAPA.

The protein belongs to the herpesviridae BTRF1 family.

This is an uncharacterized protein from Equus caballus (Horse).